Consider the following 251-residue polypeptide: Insulin-induced gene 1 protein (251 aa).

Residues 1–58 are Cytoplasmic-facing; sequence MQTLEEHCWSCSCTRGRDKKGTKVSAWLARRVGKAMSSLNSLLSLAYSTLASSEGRSL. Residues 59-81 traverse the membrane as a helical segment; the sequence is IQRSLVLFTVGVFLALVLNLLQI. At 82–100 the chain is on the extracellular side; the sequence is QRNVTLFPEEVIATIFSSA. Residues 101-118 form a helical membrane-spanning segment; that stretch reads WWVPPCCGTAAAVVGLLY. Topologically, residues 119–133 are cytoplasmic; it reads PCIDSRIGEPHKFKR. Residues 134–156 form a helical membrane-spanning segment; sequence EWASVMRCIAVFVGINHASAKLD. At 157 to 159 the chain is on the extracellular side; it reads FAN. Residues 160–178 traverse the membrane as a helical segment; it reads NVQLSLTLAALSLGLWWTF. The Cytoplasmic segment spans residues 179–183; it reads DRSRS. Residues 184–205 traverse the membrane as a helical segment; it reads GLGLGITIAFLATLITQFLVYN. Over 206–219 the chain is Extracellular; sequence GVYQYTSPDFLYIR. Residues 220–237 form a helical membrane-spanning segment; that stretch reads SWLPCIFFSGGVTVGNIG. At 238-251 the chain is on the cytoplasmic side; sequence RQLAMGSSEKTHGD. Residues 245–251 carry the KxHxx motif; it reads SEKTHGD.

It belongs to the INSIG family. As to quaternary structure, interacts with scap; interaction is direct and only takes place in the presence of sterols; it prevents interaction between scap and the coat protein complex II (COPII). Associates with the SCAP-SREBP complex; association is mediated via its interaction with scap and only takes place in the presence of sterols.

It is found in the endoplasmic reticulum membrane. Its function is as follows. Oxysterol-binding protein that mediates feedback control of cholesterol synthesis by controlling both endoplasmic reticulum to Golgi transport of scap and degradation of hmgcr. Acts as a negative regulator of cholesterol biosynthesis by mediating the retention of the SCAP-SREBP complex in the endoplasmic reticulum, thereby blocking the processing of sterol regulatory element-binding proteins (SREBPs). Binds oxysterol, including 25-hydroxycholesterol, regulating interaction with scap and retention of the SCAP-SREBP complex in the endoplasmic reticulum. In presence of oxysterol, interacts with scap, retaining the SCAP-SREBP complex in the endoplasmic reticulum, thereby preventing scap from escorting SREBPs to the Golgi. Sterol deprivation reduces oxysterol-binding, disrupting the interaction between insig1 and scap, thereby promoting Golgi transport of the SCAP-SREBP complex, followed by processing and nuclear translocation of SREBPs. Also regulates cholesterol synthesis by regulating degradation of hmgcr. The polypeptide is Insulin-induced gene 1 protein (Xenopus laevis (African clawed frog)).